A 636-amino-acid polypeptide reads, in one-letter code: Translation factor GUF1 homolog, chloroplastic (636 aa).

The tr-type G domain occupies 31–212; that stretch reads NLARNFSIIA…AIVTKIPPPQ (182 aa). GTP-binding positions include 40 to 47, 105 to 109, and 159 to 162; these read AHIDHGKS, DTPGH, and NKID.

It belongs to the TRAFAC class translation factor GTPase superfamily. Classic translation factor GTPase family. LepA subfamily.

The protein localises to the plastid. It localises to the chloroplast. The enzyme catalyses GTP + H2O = GDP + phosphate + H(+). In terms of biological role, promotes chloroplast protein synthesis. May act as a fidelity factor of the translation reaction, by catalyzing a one-codon backward translocation of tRNAs on improperly translocated ribosomes. The polypeptide is Translation factor GUF1 homolog, chloroplastic (Oryza sativa subsp. indica (Rice)).